A 351-amino-acid polypeptide reads, in one-letter code: MASSRARIAVDAMGGDYAPDEIIAGAIRASAELEVDVLLVGDSHRIESYLQQHHKPINVEIIHAEEVIAMDEEPLSAIRRKSKASINVAMDLVKEKRADAVVSAGHSGAAMASALLRLGRLKGIDRPAIGAVFPTILAGKSVIVLDVGANVDSRPKYLEQFALMGTIYSKYVLGIEEPKVGLLNIGEESSKGNDLALRTYQLLEANESIPFVGNAEGRDVLSGHFDVIVCDGFVGNVLLKFAEAVGEVMLQIIREELPQGLRGQLGTALLKPNLKRLKQRIDHAEHGGGLLFGVAGVCIISHGSSQAPSIFNAIRLAQDAINNQVLERIQAYNEQHQQESQNSTETVTSEQ.

The protein belongs to the PlsX family. In terms of assembly, homodimer. Probably interacts with PlsY.

It is found in the cytoplasm. It catalyses the reaction a fatty acyl-[ACP] + phosphate = an acyl phosphate + holo-[ACP]. It participates in lipid metabolism; phospholipid metabolism. Its function is as follows. Catalyzes the reversible formation of acyl-phosphate (acyl-PO(4)) from acyl-[acyl-carrier-protein] (acyl-ACP). This enzyme utilizes acyl-ACP as fatty acyl donor, but not acyl-CoA. This Gloeothece citriformis (strain PCC 7424) (Cyanothece sp. (strain PCC 7424)) protein is Phosphate acyltransferase.